Reading from the N-terminus, the 225-residue chain is Alpha-tubulin N-acetyltransferase 1 (225 aa).

Positions 1-190 (MEFPFDVDAL…NNFVIFEGFF (190 aa)) constitute an N-acetyltransferase domain. Lys56 bears the N6-acetyllysine; by autocatalysis mark. Position 124-137 (124-137 (FYIHESLQRHGHGR)) interacts with acetyl-CoA. N6-acetyllysine; by autocatalysis is present on Lys146. 160 to 169 (SQKLLKFLNK) lines the acetyl-CoA pocket. Residues 195-225 (PPARKLPPKRAEGDIKPYSSSDRESGLPQGW) are disordered. A compositionally biased stretch (basic and acidic residues) spans 203–219 (KRAEGDIKPYSSSDRES). Lys210 is modified (N6-acetyllysine; by autocatalysis).

Belongs to the acetyltransferase ATAT1 family. As to quaternary structure, component of the BBSome complex. Interacts with AP2 alpha-adaptins, including AP2A2, but not with AP1 gamma-adaptin (AP1G1/AP1G2); this interaction is required for efficient alpha-tubulin acetylation, hence clathrin-coated pits are sites of microtubule acetylation. Autoacetylation strongly increases tubulin acetylation.

It is found in the cytoplasm. Its subcellular location is the membrane. It localises to the clathrin-coated pit. The protein localises to the cell junction. The protein resides in the focal adhesion. It is found in the cell projection. Its subcellular location is the axon. It localises to the cytoskeleton. The protein localises to the spindle. It catalyses the reaction L-lysyl-[alpha-tubulin] + acetyl-CoA = N(6)-acetyl-L-lysyl-[alpha-tubulin] + CoA + H(+). Specifically acetylates 'Lys-40' in alpha-tubulin on the lumenal side of microtubules. Promotes microtubule destabilization and accelerates microtubule dynamics; this activity may be independent of acetylation activity. Acetylates alpha-tubulin with a slow enzymatic rate, due to a catalytic site that is not optimized for acetyl transfer. Enters the microtubule through each end and diffuses quickly throughout the lumen of microtubules. Acetylates only long/old microtubules because of its slow acetylation rate since it does not have time to act on dynamically unstable microtubules before the enzyme is released. Required for normal sperm flagellar function. Promotes directional cell locomotion and chemotaxis, through AP2A2-dependent acetylation of alpha-tubulin at clathrin-coated pits that are concentrated at the leading edge of migrating cells. May facilitate primary cilium assembly. This chain is Alpha-tubulin N-acetyltransferase 1, found in Bos taurus (Bovine).